A 181-amino-acid chain; its full sequence is Major urinary protein 20 (181 aa).

Positions 1–19 are cleaved as a signal peptide; the sequence is MKLLVLLLCLGLTLVCVHA. A disulfide bridge links C83 with C176.

It belongs to the calycin superfamily. Lipocalin family. In terms of tissue distribution, detected in urine of males but absent from female urine (at protein level).

The protein localises to the secreted. Its function is as follows. Male pheromone which stimulates female sexual attraction to male urinary scent and promotes a strong learned attraction to the airborne urinary odor of an individual male. Promotes spatial learning by rapidly conditioning preference for its remembered location among females and competitor males so that animals prefer to spend time in the site even when scent is absent. In addition to promoting a rapid attraction response, also elicits ultrasonic vocalizations and urinary scent marking in females which do not occur immediately after exposure. Stimulates hippocampal neurogenesis and cell proliferation in the subventricular zone in females. Promotes male aggressive behavior. Response to Mup20 is mediated by a neural circuit extending from the accessory olfactory bulb to a subset of nitric oxidase synthase-expressing neurons in the medial amygdala. As well as acting as a pheromone itself, binds most of the male pheromone, 2-sec-butyl-4,5-dihydrothiazole, in urine and is responsible for its slow release from scent marks. The chain is Major urinary protein 20 from Mus musculus (Mouse).